The sequence spans 3685 residues: Dystrophin (3685 aa).

An actin-binding region spans residues 1 to 240; the sequence is MLWWEEVEDC…YITSLFQVLP (240 aa). Calponin-homology (CH) domains follow at residues 15 to 119 and 134 to 240; these read DVQK…LHWQ and TNSE…QVLP. The tract at residues 63–72 is ANK2- and ANK-3 binding; that stretch reads PKEKGSTRVH. Spectrin repeat units lie at residues 339–447, 448–556, 559–667, 719–828, 830–934, 943–1045, 1048–1154, 1157–1263, 1266–1367, 1368–1463, 1468–1568, 1571–1676, 1679–1778, 1779–1874, 1877–1979, 1992–2101, 2104–2208, 2211–2318, 2319–2423, 2475–2577, 2580–2686, 2689–2802, 2808–2930, and 2935–3040; these read VNLD…NLHR, VLMD…LLQD, LKWQ…QISQ, EIRK…WLEY, NNII…ELQT, RYQE…KLEE, NKLR…ALKG, EKTV…TLEE, ACWH…LLEQ, SIQS…LFQK, EQRL…QLEK, KLSR…LLLE, KHME…KASI, PLKE…KALE, HQWY…TVRE, EISY…RFDR, EKWR…RLEE, NILS…EIEA, QIKD…LRAK, FNRA…QLNE, KDST…ALEE, RLLQ…HLEA, KRLH…RKID, and RLRE…QLHE. A Phosphothreonine modification is found at Asn-340. Residues Tyr-344 and Leu-348 each carry the phosphoserine modification. A phosphothreonine mark is found at Glu-519, Ser-616, and Ser-629. The interval 1415 to 1913 is interaction with SYNM; that stretch reads SDLTSHEISL…PEPRDERKIK (499 aa). One can recognise a WW domain in the interval 3055 to 3088; it reads TSVQGPWERAISPNKVPYYINHETQTTCWDHPKM. The interaction with SYNM stretch occupies residues 3058-3408; sequence QGPWERAISP…TVLEGDNMET (351 aa). The ZZ-type; degenerate zinc finger occupies 3308–3364; it reads KHQAKCNICKECPIIGFRYRSLKHFNYDICQSCFFSGRVAKGHKMHYPMVEYCTPTT. Zn(2+)-binding residues include Cys-3313, Cys-3316, Cys-3337, and Cys-3340. Residues 3466 to 3518 are binds to SNTB1; that stretch reads DDEHLLIQHYCQSLNQDSPLSQPRSPAQILISLESEERGELERILADLEEENR. Ser-3483, Ser-3490, and Ser-3500 each carry phosphoserine. Disordered regions lie at residues 3528–3554 and 3603–3685; these read KQQH…QSPR and EAKV…EDTM. Composition is skewed to polar residues over residues 3607-3626 and 3662-3673; these read NGTT…SSQP and QLNNSFPSSRGR. Phosphoserine occurs at positions 3612, 3613, 3617, 3623, 3624, and 3666.

Interacts with SYNM. Interacts with the syntrophins SNTA1, SNTB1, SNTB2, SNTG1 and SNTG2. Interacts with KRT19. Component of the dystrophin-associated glycoprotein complex which is composed of three subcomplexes: a cytoplasmic complex comprised of DMD (or UTRN), DTNA and a number of syntrophins, such as SNTB1, SNTB2, SNTG1 and SNTG2, the transmembrane dystroglycan complex, and the sarcoglycan-sarcospan complex. Interacts with DAG1 (betaDAG1) with DMD; the interaction is inhibited by phosphorylation on the PPXY motif of DAG1. Interacts with CMYA5. Directly interacts with ANK2 and ANK3; these interactions do not interfere with betaDAG1-binding and are necessary for proper localization in muscle cells. Identified in a dystroglycan complex that contains at least PRX, DRP2, UTRN, DMD and DAG1. Interacts with DTNB. Interacts with PGM5; the interaction is direct. Interacts with NOS1; localizes NOS1 to sarcolemma in muscle cells. As to expression, expressed in muscle fibers accumulating in the costameres of myoplasm at the sarcolemma. Expressed in brain, muscle, kidney, lung and testis. Most tissues contain transcripts of multiple isoforms. Isoform 15: Only isoform to be detected in heart and liver and is also expressed in brain, testis and hepatoma cells.

It localises to the cell membrane. The protein resides in the sarcolemma. The protein localises to the cytoplasm. It is found in the cytoskeleton. Its subcellular location is the postsynaptic cell membrane. Its function is as follows. Anchors the extracellular matrix to the cytoskeleton via F-actin. Ligand for dystroglycan. Component of the dystrophin-associated glycoprotein complex which accumulates at the neuromuscular junction (NMJ) and at a variety of synapses in the peripheral and central nervous systems and has a structural function in stabilizing the sarcolemma. Also implicated in signaling events and synaptic transmission. This Homo sapiens (Human) protein is Dystrophin.